A 187-amino-acid polypeptide reads, in one-letter code: NADPH-dependent 3-demethoxyubiquinone 3-hydroxylase, mitochondrial (187 aa).

Residues 1-8 (MFRVITRG) constitute a mitochondrion transit peptide. Lysine 21 contacts NADH. 2 consecutive repeat copies span residues 28 to 99 (AGEL…SALL) and 100 to 187 (GKEG…AEKI). Residues 28–187 (AGELGADRIY…KGAIAIAEKI (160 aa)) form a 2 X approximate tandem repeats region. Residues glutamate 30, glutamate 60, histidine 63, glutamate 112, glutamate 148, and histidine 151 each contribute to the Fe cation site. Residue lysine 186 participates in NADH binding.

Belongs to the COQ7 family. Component of a multi-subunit COQ enzyme complex. It depends on Fe cation as a cofactor.

The protein localises to the mitochondrion inner membrane. The protein resides in the mitochondrion. It is found in the nucleus. It carries out the reaction a 5-methoxy-2-methyl-3-(all-trans-polyprenyl)benzoquinone + NADH + O2 = a 3-demethylubiquinone + NAD(+) + H2O. It functions in the pathway cofactor biosynthesis; ubiquinone biosynthesis. Catalyzes the hydroxylation of the 5-methoxy-2-methyl-3-(all-trans-polyprenyl)benzoquinone at the C6 position and participates in the biosynthesis of ubiquinone. Catalyzes the reaction through a substrate-mediated reduction pathway, whereby NADH shuttles electrons to 5-methoxy-2-methyl-3-(all-trans-decaprenyl)benzoquinone, which then transfers the electrons to the two Fe(3+) centers. The binding of 5-methoxy-2-methyl-3-(all-trans-polyprenyl)benzoquinone (DMQn) mediates reduction of the diiron center by nicotinamide adenine dinucleotide (NADH) and initiates oxygen activation for subsequent DMQ hydroxylation. Also has a structural role in the COQ enzyme complex, stabilizing other COQ polypeptides. Involved in lifespan determination in a ubiquinone-independent manner. Plays a role in modulating mitochondrial stress responses, acting in the nucleus, perhaps via regulating gene expression, independent of its characterized mitochondrial function in ubiquinone biosynthesis. Plays a role in modulating polyribosome formation. The protein is NADPH-dependent 3-demethoxyubiquinone 3-hydroxylase, mitochondrial of Caenorhabditis elegans.